The primary structure comprises 429 residues: S-adenosylmethionine synthase (429 aa).

Residue glutamate 9 coordinates Mg(2+). Position 15 (histidine 15) interacts with ATP. Glutamate 43 contributes to the K(+) binding site. 2 residues coordinate L-methionine: glutamate 56 and glutamine 99. ATP is bound by residues 167 to 169 (DGK), 235 to 238 (SGRF), aspartate 246, 252 to 253 (RK), alanine 269, lysine 273, and lysine 277. Position 246 (aspartate 246) interacts with L-methionine. Position 277 (lysine 277) interacts with L-methionine.

Belongs to the AdoMet synthase family. In terms of assembly, homotetramer. The cofactor is Mn(2+). It depends on Mg(2+) as a cofactor. Co(2+) is required as a cofactor. Requires K(+) as cofactor.

It is found in the cytoplasm. It carries out the reaction L-methionine + ATP + H2O = S-adenosyl-L-methionine + phosphate + diphosphate. It functions in the pathway amino-acid biosynthesis; S-adenosyl-L-methionine biosynthesis; S-adenosyl-L-methionine from L-methionine: step 1/1. In terms of biological role, catalyzes the formation of S-adenosylmethionine from methionine and ATP. The reaction comprises two steps that are both catalyzed by the same enzyme: formation of S-adenosylmethionine (AdoMet) and triphosphate, and subsequent hydrolysis of the triphosphate. This Carica papaya (Papaya) protein is S-adenosylmethionine synthase (SAMS).